A 49-amino-acid polypeptide reads, in one-letter code: Peridinin-chlorophyll a-binding protein (49 aa).

As to quaternary structure, monomer. Post-translationally, binds 12 peridinin and 2 chlorophyll a molecules per monomer.

The protein resides in the plastid. Its subcellular location is the chloroplast. Functionally, water-soluble antenna for capture of solar energy in the blue-green range. Peridinin is an asymmetric carotenoid. This is Peridinin-chlorophyll a-binding protein from Alexandrium cohorticula (Dinoflagellate).